A 290-amino-acid chain; its full sequence is Eukaryotic translation initiation factor 3 subunit F-2 (290 aa).

Residues 12-150 (VRLQPLVLFQ…TRLYCAVTMG (139 aa)) form the MPN domain.

The protein belongs to the eIF-3 subunit F family. As to quaternary structure, component of the eukaryotic translation initiation factor 3 (eIF-3) complex. The eIF-3 complex interacts with pix.

The protein localises to the cytoplasm. Functionally, component of the eukaryotic translation initiation factor 3 (eIF-3) complex, which is involved in protein synthesis of a specialized repertoire of mRNAs and, together with other initiation factors, stimulates binding of mRNA and methionyl-tRNAi to the 40S ribosome. The eIF-3 complex specifically targets and initiates translation of a subset of mRNAs involved in cell proliferation. The protein is Eukaryotic translation initiation factor 3 subunit F-2 of Drosophila mojavensis (Fruit fly).